A 310-amino-acid polypeptide reads, in one-letter code: MVKAGNETQISEFLLLGFSEKQELQPFLFGLFLSMYLVTVLGNLLIILAAISDSCLHTPMYFFLSNLSFVDICFASTMVPKMLVNIQTQSKVITYAGCITQMCFFVLFIVLDSLLLTVMAYDQFVAICHPLHYTVIMSPQLCGLLVLVSWIMSVLNSMLQSLVTLQLSFCTDLEIPHFFCELNEMIHLACSDTFVNNMVMHFAAVLLDGGPLVGILYSYCRIVSSIRAISSTQGKYKALSTCASHLSVVSIFYGTGLGVYLSSTMTQNLHSTAVASVMYTVVTPMLNPFIYSLRNKDIKGALTQFFRGKQ.

Residues Met1–Pro26 are Extracellular-facing. N-linked (GlcNAc...) asparagine glycosylation is present at Asn6. Residues Phe27–Ile47 traverse the membrane as a helical segment. Over Leu48–Cys55 the chain is Cytoplasmic. A helical transmembrane segment spans residues Leu56–Ser76. The Extracellular portion of the chain corresponds to Thr77 to Thr100. An intrachain disulfide couples Cys98 to Cys190. The helical transmembrane segment at Gln101–Tyr121 threads the bilayer. The Cytoplasmic segment spans residues Asp122 to Gln140. Residues Leu141–Ser161 form a helical membrane-spanning segment. Over Leu162–Met198 the chain is Extracellular. The helical transmembrane segment at Val199 to Ser218 threads the bilayer. The Cytoplasmic portion of the chain corresponds to Tyr219–Ala238. Residues Leu239–Val259 form a helical membrane-spanning segment. The Extracellular segment spans residues Tyr260 to Thr272. The chain crosses the membrane as a helical span at residues Ala273 to Leu293. The Cytoplasmic portion of the chain corresponds to Arg294–Gln310.

It belongs to the G-protein coupled receptor 1 family.

The protein localises to the cell membrane. Functionally, odorant receptor. This is Putative olfactory receptor 7A2 (OR7A2P) from Homo sapiens (Human).